The chain runs to 208 residues: MTKGILGKKVGMTQIFTEAGEFIPVTVIEATPNVVLQVKTVETDGYEAVQVGFDDKREVLSNKPAKGHVAKANTAPKRFIREFKNIEGLEVGSEITVDIFEAGDVVDVTGTSKGKGFQGVIKRHGQSRGPMAHGSRYHRRPGSMGPVAPNRVFKNKHLAGRMGGNRVTIQNLEIVQVIPEKNVILIKGNVPGAKKSLITIKSAVKAAK.

A disordered region spans residues 123–146 (RHGQSRGPMAHGSRYHRRPGSMGP).

This sequence belongs to the universal ribosomal protein uL3 family. As to quaternary structure, part of the 50S ribosomal subunit. Forms a cluster with proteins L14 and L19.

Functionally, one of the primary rRNA binding proteins, it binds directly near the 3'-end of the 23S rRNA, where it nucleates assembly of the 50S subunit. The protein is Large ribosomal subunit protein uL3 of Streptococcus thermophilus (strain CNRZ 1066).